The primary structure comprises 426 residues: Serine/threonine-protein kinase ssn3 (426 aa).

Positions 41–368 (YHIVGFISSG…AREALEHPYF (328 aa)) constitute a Protein kinase domain. Residues 47–55 (ISSGTYGRV) and K71 each bind ATP. Residue D173 is the Proton acceptor of the active site. The disordered stretch occupies residues 390 to 426 (RVTQDDNDIRSGSLPGTKRSGLPDDSLMGRAAKRLKE).

This sequence belongs to the protein kinase superfamily. CMGC Ser/Thr protein kinase family. CDC2/CDKX subfamily. In terms of assembly, component of the srb8-11 complex, a regulatory module of the Mediator complex. It depends on Mg(2+) as a cofactor.

The protein localises to the nucleus. The catalysed reaction is L-seryl-[protein] + ATP = O-phospho-L-seryl-[protein] + ADP + H(+). It catalyses the reaction L-threonyl-[protein] + ATP = O-phospho-L-threonyl-[protein] + ADP + H(+). It carries out the reaction [DNA-directed RNA polymerase] + ATP = phospho-[DNA-directed RNA polymerase] + ADP + H(+). In terms of biological role, component of the srb8-11 complex. The srb8-11 complex is a regulatory module of the Mediator complex which is itself involved in regulation of basal and activated RNA polymerase II-dependent transcription. The srb8-11 complex may be involved in the transcriptional repression of a subset of genes regulated by Mediator. It may inhibit the association of the Mediator complex with RNA polymerase II to form the holoenzyme complex. The srb8-11 complex phosphorylates the C-terminal domain (CTD) of the largest subunit of RNA polymerase II. The chain is Serine/threonine-protein kinase ssn3 (ssn3) from Aspergillus fumigatus (strain ATCC MYA-4609 / CBS 101355 / FGSC A1100 / Af293) (Neosartorya fumigata).